We begin with the raw amino-acid sequence, 608 residues long: Glutamine--fructose-6-phosphate aminotransferase [isomerizing] (608 aa).

The Nucleophile; for GATase activity role is filled by Cys-2. The Glutamine amidotransferase type-2 domain occupies Cys-2–Asp-217. SIS domains are found at residues Thr-285–Thr-424 and Val-453–Pro-598. Lys-603 acts as the For Fru-6P isomerization activity in catalysis.

Homodimer.

It is found in the cytoplasm. The enzyme catalyses D-fructose 6-phosphate + L-glutamine = D-glucosamine 6-phosphate + L-glutamate. In terms of biological role, catalyzes the first step in hexosamine metabolism, converting fructose-6P into glucosamine-6P using glutamine as a nitrogen source. This Caldanaerobacter subterraneus subsp. tengcongensis (strain DSM 15242 / JCM 11007 / NBRC 100824 / MB4) (Thermoanaerobacter tengcongensis) protein is Glutamine--fructose-6-phosphate aminotransferase [isomerizing].